Consider the following 455-residue polypeptide: tRNA-2-methylthio-N(6)-dimethylallyladenosine synthase (455 aa).

Positions 18–136 (KLFFIQTYGC…FPEYLNRVKT (119 aa)) constitute an MTTase N-terminal domain. Residues Cys27, Cys63, Cys97, Cys173, Cys177, and Cys180 each coordinate [4Fe-4S] cluster. Positions 159 to 389 (RKSDIKGFVT…VEIVNTGIAK (231 aa)) constitute a Radical SAM core domain. One can recognise a TRAM domain in the interval 392-455 (KDAEGKIYEV…SFSLIGEVEK (64 aa)).

This sequence belongs to the methylthiotransferase family. MiaB subfamily. Monomer. [4Fe-4S] cluster serves as cofactor.

The protein localises to the cytoplasm. The enzyme catalyses N(6)-dimethylallyladenosine(37) in tRNA + (sulfur carrier)-SH + AH2 + 2 S-adenosyl-L-methionine = 2-methylsulfanyl-N(6)-dimethylallyladenosine(37) in tRNA + (sulfur carrier)-H + 5'-deoxyadenosine + L-methionine + A + S-adenosyl-L-homocysteine + 2 H(+). Catalyzes the methylthiolation of N6-(dimethylallyl)adenosine (i(6)A), leading to the formation of 2-methylthio-N6-(dimethylallyl)adenosine (ms(2)i(6)A) at position 37 in tRNAs that read codons beginning with uridine. This chain is tRNA-2-methylthio-N(6)-dimethylallyladenosine synthase, found in Clostridium beijerinckii (strain ATCC 51743 / NCIMB 8052) (Clostridium acetobutylicum).